Reading from the N-terminus, the 505-residue chain is ATP synthase subunit alpha (505 aa).

171-178 (GDRQTGKT) contributes to the ATP binding site.

The protein belongs to the ATPase alpha/beta chains family. F-type ATPases have 2 components, CF(1) - the catalytic core - and CF(0) - the membrane proton channel. CF(1) has five subunits: alpha(3), beta(3), gamma(1), delta(1), epsilon(1). CF(0) has three main subunits: a(1), b(2) and c(9-12). The alpha and beta chains form an alternating ring which encloses part of the gamma chain. CF(1) is attached to CF(0) by a central stalk formed by the gamma and epsilon chains, while a peripheral stalk is formed by the delta and b chains.

It localises to the cell inner membrane. It carries out the reaction ATP + H2O + 4 H(+)(in) = ADP + phosphate + 5 H(+)(out). Its function is as follows. Produces ATP from ADP in the presence of a proton gradient across the membrane. The alpha chain is a regulatory subunit. This chain is ATP synthase subunit alpha, found in Nitratiruptor sp. (strain SB155-2).